Reading from the N-terminus, the 91-residue chain is Probable Fe(2+)-trafficking protein (91 aa).

Belongs to the Fe(2+)-trafficking protein family.

Could be a mediator in iron transactions between iron acquisition and iron-requiring processes, such as synthesis and/or repair of Fe-S clusters in biosynthetic enzymes. The sequence is that of Probable Fe(2+)-trafficking protein from Polynucleobacter necessarius subsp. necessarius (strain STIR1).